A 115-amino-acid polypeptide reads, in one-letter code: Large ribosomal subunit protein bL19 (115 aa).

The protein belongs to the bacterial ribosomal protein bL19 family.

Functionally, this protein is located at the 30S-50S ribosomal subunit interface and may play a role in the structure and function of the aminoacyl-tRNA binding site. This chain is Large ribosomal subunit protein bL19, found in Thermosipho melanesiensis (strain DSM 12029 / CIP 104789 / BI429).